We begin with the raw amino-acid sequence, 834 residues long: Arf-GAP with coiled-coil, ANK repeat and PH domain-containing protein 3 (834 aa).

Positions 268 to 363 (GVVMEGYLFK…WVQAVQASIA (96 aa)) constitute a PH domain. The segment at 375 to 400 (SERLDRTASPSTSSIDSATDTRERGV) is disordered. The span at 382 to 392 (ASPSTSSIDSA) shows a compositional bias: polar residues. Residues 403-525 (ESVLQRVQSV…KFLRKAPMAP (123 aa)) enclose the Arf-GAP domain. The segment at 418 to 441 (CGDCGQPDPRWASINLGVLLCIEC) adopts a C4-type zinc-finger fold. Residues 633–653 (SVTEEEGAESEESSGEADGDT) are disordered. The segment covering 634–653 (VTEEEGAESEESSGEADGDT) has biased composition (acidic residues). ANK repeat units follow at residues 702–731 (EGKT…DVNQ), 735–764 (RGRA…DQHA), and 768–797 (EQRD…AEEM).

Its function is as follows. GTPase-activating protein for the ADP ribosylation factor family. In Homo sapiens (Human), this protein is Arf-GAP with coiled-coil, ANK repeat and PH domain-containing protein 3 (ACAP3).